The chain runs to 291 residues: N-acetylmannosamine kinase (291 aa).

ATP is bound by residues 5–12 and 132–139; these read AIDIGGTK and GVGGGVVS. H156, C166, C168, and C173 together coordinate Zn(2+).

This sequence belongs to the ROK (NagC/XylR) family. NanK subfamily. As to quaternary structure, homodimer.

It catalyses the reaction an N-acyl-D-mannosamine + ATP = an N-acyl-D-mannosamine 6-phosphate + ADP + H(+). Its pathway is amino-sugar metabolism; N-acetylneuraminate degradation; D-fructose 6-phosphate from N-acetylneuraminate: step 2/5. Functionally, catalyzes the phosphorylation of N-acetylmannosamine (ManNAc) to ManNAc-6-P. In Escherichia coli O6:H1 (strain CFT073 / ATCC 700928 / UPEC), this protein is N-acetylmannosamine kinase (nanK1).